The sequence spans 381 residues: Creatine kinase M-type (381 aa).

One can recognise a Phosphagen kinase N-terminal domain in the interval 11–98 (KLNYKSEEEY…FDPIIQDRHG (88 aa)). In terms of domain architecture, Phosphagen kinase C-terminal spans 125-367 (YVLSSRVRTG…KLMVEMEKKL (243 aa)). An ATP-binding site is contributed by 128–132 (SSRVR). Ser164 is modified (phosphoserine). Thr166 is modified (phosphothreonine). Ser178 carries the phosphoserine modification. Thr180 is modified (phosphothreonine). Residue His191 participates in ATP binding. At Ser199 the chain carries Phosphoserine. Residues Arg236 and Arg292 each contribute to the ATP site. A phosphothreonine mark is found at Thr313 and Thr322. 320–325 (RGTGGV) lines the ATP pocket. Residue Ser372 is modified to Phosphoserine.

The protein belongs to the ATP:guanido phosphotransferase family. Dimer of identical or non-identical chains, which can be either B (brain type) or M (muscle type). With MM being the major form in skeletal muscle and myocardium, MB existing in myocardium, and BB existing in many tissues, especially brain.

It catalyses the reaction creatine + ATP = N-phosphocreatine + ADP + H(+). Its function is as follows. Reversibly catalyzes the transfer of phosphate between ATP and various phosphogens (e.g. creatine phosphate). Creatine kinase isoenzymes play a central role in energy transduction in tissues with large, fluctuating energy demands, such as skeletal muscle, heart, brain and spermatozoa. The protein is Creatine kinase M-type (CKM) of Oryctolagus cuniculus (Rabbit).